Consider the following 442-residue polypeptide: Phosphatidylserine synthase 2 (442 aa).

Residues 1–40 are Cytoplasmic-facing; the sequence is MRRGERRGPAGPLGDGPALGLRRSTESEVYDDGTNTFFWR. The helical transmembrane segment at 41–61 threads the bilayer; that stretch reads AHTLTVLFILTCALGYVTLLE. At 62-74 the chain is on the lumenal side; the sequence is ETPQDTAYNTKRG. The helical transmembrane segment at 75–95 threads the bilayer; sequence IVASILVFLCFGVTQAKDGPF. Residues 96–104 are Cytoplasmic-facing; the sequence is SRPHPAYWR. The helical transmembrane segment at 105 to 125 threads the bilayer; the sequence is FWLCVSVVYELFLIFILFQTV. The Lumenal segment spans residues 126–291; that stretch reads QDGRQFMKYI…EWKPASSLRR (166 aa). N159 and N215 each carry an N-linked (GlcNAc...) asparagine glycan. A helical membrane pass occupies residues 292 to 312; it reads WLAVCGIIFVFLLAELNTFYL. Position 313 (K313) is a topological domain, cytoplasmic. A helical transmembrane segment spans residues 314–334; it reads FVLWMPPEHYLVLLRLVFFVN. The Lumenal portion of the chain corresponds to 335–354; sequence VGGVAMREIYDFMDDPKFHK. A helical transmembrane segment spans residues 355–375; it reads KLGQQAWLVAAITATEFLIVV. Residues 376–381 are Cytoplasmic-facing; that stretch reads KYDPYT. A helical transmembrane segment spans residues 382–402; sequence LTLSLPFYITQCWILGIILVL. Residues 403 to 442 lie on the Lumenal side of the membrane; that stretch reads TWTAWRFFIRDITLRYKEIRRQKQEHKYEKDKCLSNGDGH.

Belongs to the phosphatidyl serine synthase family.

It is found in the endoplasmic reticulum membrane. The catalysed reaction is a 1,2-diacyl-sn-glycero-3-phosphoethanolamine + L-serine = a 1,2-diacyl-sn-glycero-3-phospho-L-serine + ethanolamine. It catalyses the reaction 1-hexadecanoyl-2-(9Z-octadecenoyl)-sn-glycero-3-phosphoethanolamine + L-serine = 1-hexadecanoyl-2-(9Z-octadecenoyl)-sn-glycero-3-phospho-L-serine + ethanolamine. It carries out the reaction 1-hexadecanoyl-2-(4Z,7Z,10Z,13Z,16Z,19Z-docosahexaenoyl)-sn-glycero-3-phosphoethanolamine + L-serine = 1-hexadecanoyl-2-(4Z,7Z,10Z,13Z,16Z,19Z-docosahexaenoyl)-sn-glycero-3-phosphoserine + ethanolamine. The enzyme catalyses 1-octadecanoyl-2-(5Z,8Z,11Z,14Z)-eicosatetraenoyl-sn-glycero-3-phosphoethanolamine + L-serine = 1-octadecanoyl-2-(5Z,8Z,11Z,14Z)-eicosatetraenoyl-sn-glycero-3-phosphoserine + ethanolamine. The catalysed reaction is 1-octadecanoyl-2-(4Z,7Z,10Z,13Z,16Z,19Z-docosahexaenoyl)-sn-glycero-3-phosphoethanolamine + L-serine = 1-octadecanoyl-2-(4Z,7Z,10Z,13Z,16Z,19Z-docosahexaenoyl)-sn-glycero-3-phosphoserine + ethanolamine. It catalyses the reaction 1-(1Z-octadecenyl)-2-(4Z,7Z,10Z,13Z,16Z,19Z-docosahexaenoyl)-sn-glycero-3-phosphoethanolamine + L-serine = 1-(1Z-octadecenyl)-2-(4Z,7Z,10Z,13Z,16Z,19Z-docosahexaenoyl)-sn-glycero-3-phospho-L-serine + ethanolamine. It carries out the reaction 1-octadecanoyl-2-(9Z-octadecenoyl)-sn-glycero-3-phosphoethanolamine + L-serine = 1-octadecanoyl-2-(9Z-octadecenoyl)-sn-glycero-3-phospho-L-serine + ethanolamine. The enzyme catalyses 1-(1Z-octadecenyl)-2-(9Z-octadecenoyl)-sn-glycero-3-phosphoethanolamine + L-serine = 1-(1Z-octadecenyl)-2-(9Z-octadecenoyl)-sn-glycero-3-phospho-L-serine + ethanolamine. The catalysed reaction is 1-(1Z-octadecenyl)-2-(5Z,8Z,11Z,14Z- eicosatetraenoyl)-sn-glycero-3-phosphoethanolamine + L-serine = 1-(1Z-octadecenyl)-2-(5Z,8Z,11Z,14Z-eicosatetraenoyl)-sn-glycero-3-phospho-L-serine + ethanolamine. Its pathway is phospholipid metabolism; phosphatidylserine biosynthesis. Its function is as follows. Catalyzes a base-exchange reaction in which the polar head group of phosphatidylethanolamine (PE) or phosphatidylcholine (PC) is replaced by L-serine. Catalyzes the conversion of phosphatatidylethanolamine and does not act on phosphatidylcholine. Can utilize both phosphatidylethanolamine (PE) plasmalogen and diacyl PE as substrate and the latter is six times better utilized, indicating the importance of an ester linkage at the sn-1 position. Although it shows no sn-1 fatty acyl preference, exhibits significant preference towards docosahexaenoic acid (22:6n-3) compared with 18:1 or 20:4 at the sn-2 position. In Gallus gallus (Chicken), this protein is Phosphatidylserine synthase 2 (PTDSS1).